We begin with the raw amino-acid sequence, 273 residues long: uncharacterized protein (273 aa).

The signal sequence occupies residues 1–21; the sequence is MKILRWLFALVMLIATTEAMA.

It to S.typhimurium YadU.

Its function is as follows. Part of the yfcOPQRSUV fimbrial operon. Could contribute to adhesion to various surfaces in specific environmental niches. Increases adhesion to eukaryotic T24 bladder epithelial cells in the absence of fim genes. This is an uncharacterized protein from Escherichia coli (strain K12).